Here is a 357-residue protein sequence, read N- to C-terminus: Membrane-bound lytic murein transglycosylase C (357 aa).

An N-terminal signal peptide occupies residues 1–16; sequence MKKLLALFVIAPILIS. A lipid anchor (N-palmitoyl cysteine) is attached at Cys-17. A lipid anchor (S-diacylglycerol cysteine) is attached at Cys-17.

The protein belongs to the transglycosylase Slt family.

The protein resides in the cell outer membrane. The catalysed reaction is Exolytic cleavage of the (1-&gt;4)-beta-glycosidic linkage between N-acetylmuramic acid (MurNAc) and N-acetylglucosamine (GlcNAc) residues in peptidoglycan, from either the reducing or the non-reducing ends of the peptidoglycan chains, with concomitant formation of a 1,6-anhydrobond in the MurNAc residue.. Its function is as follows. Murein-degrading enzyme. May play a role in recycling of muropeptides during cell elongation and/or cell division. The sequence is that of Membrane-bound lytic murein transglycosylase C from Photorhabdus laumondii subsp. laumondii (strain DSM 15139 / CIP 105565 / TT01) (Photorhabdus luminescens subsp. laumondii).